A 698-amino-acid chain; its full sequence is Serotransferrin (698 aa).

The first 19 residues, 1–19 (MRLAVGALLVCAVLGLCLA), serve as a signal peptide directing secretion. Transferrin-like domains lie at 25-347 (VRWC…NLRE) and 361-683 (VKWC…NLRK). Cystine bridges form between Cys-28/Cys-67 and Cys-38/Cys-58. The residue at position 42 (Arg-42) is a Dimethylated arginine. O-linked (GalNAc...) serine glycosylation occurs at Ser-51. Fe(3+)-binding residues include Asp-82 and Tyr-114. Cystine bridges form between Cys-137–Cys-213, Cys-156–Cys-350, Cys-177–Cys-193, Cys-180–Cys-198, Cys-190–Cys-196, Cys-246–Cys-260, Cys-358–Cys-615, Cys-364–Cys-396, Cys-374–Cys-387, Cys-421–Cys-693, Cys-437–Cys-656, Cys-469–Cys-542, Cys-493–Cys-684, Cys-503–Cys-517, Cys-514–Cys-525, Cys-582–Cys-596, and Cys-634–Cys-639. 4 residues coordinate hydrogencarbonate: Thr-139, Arg-143, Ala-145, and Gly-146. Position 207 (Tyr-207) interacts with Fe(3+). Residue His-268 coordinates Fe(3+). Ser-389 carries the post-translational modification Phosphoserine; by FAM20C. A Fe(3+)-binding site is contributed by Asp-411. N-linked (GlcNAc...) (complex) asparagine glycosylation occurs at Asn-432. Tyr-445 provides a ligand contact to Fe(3+). The hydrogencarbonate site is built by Thr-471, Arg-475, Ala-477, and Gly-478. Residue Asn-491 is glycosylated (N-linked (GlcNAc...) asparagine; atypical; partial). Tyr-536 lines the Fe(3+) pocket. A Fe(3+)-binding site is contributed by His-604. A glycan (N-linked (GlcNAc...) (complex) asparagine) is linked at Asn-630. Ser-685 is modified (phosphoserine; by FAM20C).

The protein belongs to the transferrin family. As to quaternary structure, monomer. Part of a complex composed of SLC40A1/ferroportin, TF/transferrin and HEPH/hephaestin that transfers iron from cells to transferrin. (Microbial infection) Binds to Neisseria transferrin-binding protein A (tbpA or tbp1). Forms a large complex with TbpA and TbpB. In terms of assembly, (Microbial infection) Binds to Neisseria transferrin-binding protein B (tbpb or tbp2). Expressed by the liver and secreted in plasma.

It is found in the secreted. Functionally, transferrins are iron binding transport proteins which can bind two Fe(3+) ions in association with the binding of an anion, usually bicarbonate. It is responsible for the transport of iron from sites of absorption and heme degradation to those of storage and utilization. Serum transferrin may also have a further role in stimulating cell proliferation. (Microbial infection) Serves as an iron source for Neisseria species, which capture the protein and extract its iron for their own use. Its function is as follows. (Microbial infection) Serves as an iron source for parasite T.brucei (strain 427), which capture TF via its own transferrin receptor ESAG6:ESAG7 and extract its iron for its own use. This is Serotransferrin from Homo sapiens (Human).